The following is a 424-amino-acid chain: Protein maelstrom 1 (424 aa).

The segment at residues proline 2–asparagine 69 is a DNA-binding region (HMG box).

Belongs to the maelstrom family.

It is found in the cytoplasm. The protein localises to the nucleus. Its function is as follows. Involved both in the piRNA and miRNA metabolic processes. As a component of the meiotic nuage, plays a central role during oogenesis by repressing transposable elements and preventing their mobilization, which is essential for the germline integrity. Repression of transposable elements is mediated via the piRNA metabolic process, which mediates the repression of transposable elements during meiosis by forming complexes composed of piRNAs and Piwi proteins and governs the repression of transposons. As a nuclear component, it is required for proper differentiation in the germline stem cell (GSC) lineage by repressing microRNA-7 (miR-7), thereby acting as an indirect regulator of bag-of-marbles (Bam). Acts by binding to the promoter of miR-7 gene and repressing its expression; miR-7 repression alleviates the Bam repression by miR-7, thereby allowing differentiation in the germline stem cell (GSC) lineage. The chain is Protein maelstrom 1 (mael1) from Drosophila ananassae (Fruit fly).